The chain runs to 90 residues: Auxin-responsive protein SAUR23 (90 aa).

The protein belongs to the ARG7 family.

The protein resides in the cell membrane. Its function is as follows. Functions as a positive effector of cell expansion through modulation of auxin transport. This Arabidopsis thaliana (Mouse-ear cress) protein is Auxin-responsive protein SAUR23.